The primary structure comprises 742 residues: Phosphoribosylformylglycinamidine synthase subunit PurL (742 aa).

His-54 is a catalytic residue. ATP is bound by residues Tyr-57 and Lys-96. Glu-98 is a binding site for Mg(2+). Substrate contacts are provided by residues 99-102 and Arg-121; that span reads SHNH. Catalysis depends on His-100, which acts as the Proton acceptor. Asp-122 contributes to the Mg(2+) binding site. Gln-245 serves as a coordination point for substrate. Mg(2+) is bound at residue Asp-273. 317 to 319 contributes to the substrate binding site; sequence ESQ. Residues Asp-500 and Gly-537 each coordinate ATP. Asn-538 contributes to the Mg(2+) binding site. Ser-540 contributes to the substrate binding site.

The protein belongs to the FGAMS family. As to quaternary structure, monomer. Part of the FGAM synthase complex composed of 1 PurL, 1 PurQ and 2 PurS subunits.

It is found in the cytoplasm. It catalyses the reaction N(2)-formyl-N(1)-(5-phospho-beta-D-ribosyl)glycinamide + L-glutamine + ATP + H2O = 2-formamido-N(1)-(5-O-phospho-beta-D-ribosyl)acetamidine + L-glutamate + ADP + phosphate + H(+). It participates in purine metabolism; IMP biosynthesis via de novo pathway; 5-amino-1-(5-phospho-D-ribosyl)imidazole from N(2)-formyl-N(1)-(5-phospho-D-ribosyl)glycinamide: step 1/2. Its function is as follows. Part of the phosphoribosylformylglycinamidine synthase complex involved in the purines biosynthetic pathway. Catalyzes the ATP-dependent conversion of formylglycinamide ribonucleotide (FGAR) and glutamine to yield formylglycinamidine ribonucleotide (FGAM) and glutamate. The FGAM synthase complex is composed of three subunits. PurQ produces an ammonia molecule by converting glutamine to glutamate. PurL transfers the ammonia molecule to FGAR to form FGAM in an ATP-dependent manner. PurS interacts with PurQ and PurL and is thought to assist in the transfer of the ammonia molecule from PurQ to PurL. The chain is Phosphoribosylformylglycinamidine synthase subunit PurL from Bacillus velezensis (strain DSM 23117 / BGSC 10A6 / LMG 26770 / FZB42) (Bacillus amyloliquefaciens subsp. plantarum).